A 106-amino-acid chain; its full sequence is Large ribosomal subunit protein eL42 (106 aa).

Residues phenylalanine 36–proline 56 are disordered.

This sequence belongs to the eukaryotic ribosomal protein eL42 family.

The protein is Large ribosomal subunit protein eL42 (RPL44) of Coprinopsis cinerea (strain Okayama-7 / 130 / ATCC MYA-4618 / FGSC 9003) (Inky cap fungus).